The sequence spans 219 residues: UPF0126 membrane protein SCO5481 (219 aa).

The next 6 helical transmembrane spans lie at 10–30 (VQHTLDLVGIFVFAISGALLA), 34–54 (NFDVFGIAVLAEVTALGGGLF), 66–86 (AFTDLGYFLTPLLATLLVFFL), 93–113 (LQTGVNIFDAAGLGLFCVAGT), 120–140 (GLGLTASACLGLTTAVGGGVL), and 158–178 (LYAVPAIVGSAMVALCIRYEA).

This sequence belongs to the UPF0126 family.

It localises to the cell membrane. This Streptomyces coelicolor (strain ATCC BAA-471 / A3(2) / M145) protein is UPF0126 membrane protein SCO5481.